Consider the following 291-residue polypeptide: Acetylglutamate kinase (291 aa).

Residues 61–62 (GG), R83, and N187 each bind substrate.

It belongs to the acetylglutamate kinase family. ArgB subfamily.

Its subcellular location is the cytoplasm. It catalyses the reaction N-acetyl-L-glutamate + ATP = N-acetyl-L-glutamyl 5-phosphate + ADP. The protein operates within amino-acid biosynthesis; L-arginine biosynthesis; N(2)-acetyl-L-ornithine from L-glutamate: step 2/4. Functionally, catalyzes the ATP-dependent phosphorylation of N-acetyl-L-glutamate. This is Acetylglutamate kinase from Methanoregula boonei (strain DSM 21154 / JCM 14090 / 6A8).